A 289-amino-acid polypeptide reads, in one-letter code: Type II methyltransferase M.MjaIII (289 aa).

S-adenosyl-L-methionine is bound by residues Trp-9, Lys-13, Asp-63, and Asp-199.

The protein belongs to the N(4)/N(6)-methyltransferase family.

The enzyme catalyses a 2'-deoxyadenosine in DNA + S-adenosyl-L-methionine = an N(6)-methyl-2'-deoxyadenosine in DNA + S-adenosyl-L-homocysteine + H(+). Its function is as follows. An alpha subtype methylase that recognizes the double-stranded sequence 5'-GATC-3', methylates A-2 on both strands, and protects the DNA from cleavage by the MjaIII endonuclease. In Methanocaldococcus jannaschii (strain ATCC 43067 / DSM 2661 / JAL-1 / JCM 10045 / NBRC 100440) (Methanococcus jannaschii), this protein is Type II methyltransferase M.MjaIII (mjaIIIM).